The chain runs to 502 residues: Lipoprotein LipO (502 aa).

Positions 1–21 (MKIRMRKKWMALPLAAMMIAG) are cleaved as a signal peptide. C22 is lipidated: N-palmitoyl cysteine. Residue C22 is the site of S-diacylglycerol cysteine attachment.

Its subcellular location is the cell membrane. The protein is Lipoprotein LipO (lipO) of Bacillus subtilis (strain 168).